A 257-amino-acid polypeptide reads, in one-letter code: NH(3)-dependent NAD(+) synthetase (257 aa).

Residue 32–39 (GLSGGVDS) coordinates ATP. Aspartate 38 is a Mg(2+) binding site. A deamido-NAD(+)-binding site is contributed by arginine 113. Threonine 133 serves as a coordination point for ATP. Glutamate 138 lines the Mg(2+) pocket. Lysine 162 and serine 184 together coordinate ATP.

The protein belongs to the NAD synthetase family. In terms of assembly, homodimer.

It carries out the reaction deamido-NAD(+) + NH4(+) + ATP = AMP + diphosphate + NAD(+) + H(+). Its pathway is cofactor biosynthesis; NAD(+) biosynthesis; NAD(+) from deamido-NAD(+) (ammonia route): step 1/1. In terms of biological role, catalyzes the ATP-dependent amidation of deamido-NAD to form NAD. Uses ammonia as a nitrogen source. This chain is NH(3)-dependent NAD(+) synthetase, found in Wolinella succinogenes (strain ATCC 29543 / DSM 1740 / CCUG 13145 / JCM 31913 / LMG 7466 / NCTC 11488 / FDC 602W) (Vibrio succinogenes).